A 359-amino-acid chain; its full sequence is Nicotinate-nucleotide--dimethylbenzimidazole phosphoribosyltransferase (359 aa).

Glu-318 functions as the Proton acceptor in the catalytic mechanism.

Belongs to the CobT family. Homodimer.

The enzyme catalyses 5,6-dimethylbenzimidazole + nicotinate beta-D-ribonucleotide = alpha-ribazole 5'-phosphate + nicotinate + H(+). Its pathway is nucleoside biosynthesis; alpha-ribazole biosynthesis; alpha-ribazole from 5,6-dimethylbenzimidazole: step 1/2. Its function is as follows. Catalyzes the synthesis of alpha-ribazole-5'-phosphate from nicotinate mononucleotide (NAMN) and 5,6-dimethylbenzimidazole (DMB). The sequence is that of Nicotinate-nucleotide--dimethylbenzimidazole phosphoribosyltransferase from Escherichia coli O81 (strain ED1a).